Consider the following 153-residue polypeptide: UPF0756 membrane protein LCA_1031 (153 aa).

4 helical membrane passes run Trp4–Ile24, Trp52–Phe72, Phe85–Leu105, and Leu115–Ile135.

Belongs to the UPF0756 family.

The protein resides in the cell membrane. The polypeptide is UPF0756 membrane protein LCA_1031 (Latilactobacillus sakei subsp. sakei (strain 23K) (Lactobacillus sakei subsp. sakei)).